A 510-amino-acid polypeptide reads, in one-letter code: Hexose carrier protein HEX6 (510 aa).

Residues 1–22 (MAAGLAITSEGGQYNGRMTSFV) are Cytoplasmic-facing. Helical transmembrane passes span 23-43 (ALSC…IGVS), 83-103 (SFTS…SSVT), 118-128 (VFLAXAALGGA), 140-160 (VLLG…LSEM), 169-189 (INNG…LINY), 202-222 (ISLA…LFLP), 284-304 (LVMA…VIAF), 325-345 (IVTG…VDKL), 349-369 (ALFI…GSIM), 382-402 (GYAY…GWSW), 428-448 (AVSF…LCHF), and 451-471 (GIFF…HFLL). The Cytoplasmic segment spans residues 472-510 (PETKKVPIEKMDIVWRDHWFWKKIIGEEAAEENNKMEAA).

Belongs to the major facilitator superfamily. Sugar transporter (TC 2.A.1.1) family.

The protein resides in the membrane. In terms of biological role, active uptake of hexoses. Probable glucose/hydrogen symport. The protein is Hexose carrier protein HEX6 (HEX6) of Ricinus communis (Castor bean).